The sequence spans 126 residues: MPKHNKLLGAFGEAYAARWLATRGYIIITRNWRRATGEIDIIAQQDDTIVFVEVKTLRCTSYADLAIIVGKRKQKRICETAKHFLASAREYNHMCARFDVIVLRSDPFRRQDVDIVHLPHAFEDLV.

The protein belongs to the UPF0102 family.

The sequence is that of UPF0102 protein TP_0913 from Treponema pallidum (strain Nichols).